A 449-amino-acid polypeptide reads, in one-letter code: Serine--tRNA ligase (449 aa).

256-258 (TSE) contacts L-serine. An ATP-binding site is contributed by 287–289 (RAE). Glu-310 is an L-serine binding site. 374-377 (EISS) contributes to the ATP binding site. Ser-410 contributes to the L-serine binding site.

This sequence belongs to the class-II aminoacyl-tRNA synthetase family. Type-1 seryl-tRNA synthetase subfamily. As to quaternary structure, homodimer. The tRNA molecule binds across the dimer.

It localises to the cytoplasm. The catalysed reaction is tRNA(Ser) + L-serine + ATP = L-seryl-tRNA(Ser) + AMP + diphosphate + H(+). The enzyme catalyses tRNA(Sec) + L-serine + ATP = L-seryl-tRNA(Sec) + AMP + diphosphate + H(+). It functions in the pathway aminoacyl-tRNA biosynthesis; selenocysteinyl-tRNA(Sec) biosynthesis; L-seryl-tRNA(Sec) from L-serine and tRNA(Sec): step 1/1. Catalyzes the attachment of serine to tRNA(Ser). Is also able to aminoacylate tRNA(Sec) with serine, to form the misacylated tRNA L-seryl-tRNA(Sec), which will be further converted into selenocysteinyl-tRNA(Sec). This is Serine--tRNA ligase from Xanthomonas oryzae pv. oryzae (strain MAFF 311018).